The chain runs to 334 residues: Beta-ketoacyl-[acyl-carrier-protein] synthase III (334 aa).

Catalysis depends on residues cysteine 114 and histidine 253. The tract at residues 254 to 258 is ACP-binding; it reads QANIR. Asparagine 283 is an active-site residue.

The protein belongs to the thiolase-like superfamily. FabH family. As to quaternary structure, homodimer.

It is found in the cytoplasm. It carries out the reaction malonyl-[ACP] + acetyl-CoA + H(+) = 3-oxobutanoyl-[ACP] + CO2 + CoA. It participates in lipid metabolism; fatty acid biosynthesis. Catalyzes the condensation reaction of fatty acid synthesis by the addition to an acyl acceptor of two carbons from malonyl-ACP. Catalyzes the first condensation reaction which initiates fatty acid synthesis and may therefore play a role in governing the total rate of fatty acid production. Possesses both acetoacetyl-ACP synthase and acetyl transacylase activities. Its substrate specificity determines the biosynthesis of branched-chain and/or straight-chain of fatty acids. The chain is Beta-ketoacyl-[acyl-carrier-protein] synthase III from Campylobacter curvus (strain 525.92).